We begin with the raw amino-acid sequence, 128 residues long: Large ribosomal subunit protein bL12 (128 aa).

It belongs to the bacterial ribosomal protein bL12 family. Homodimer. Part of the ribosomal stalk of the 50S ribosomal subunit. Forms a multimeric L10(L12)X complex, where L10 forms an elongated spine to which 2 to 4 L12 dimers bind in a sequential fashion. Binds GTP-bound translation factors.

Functionally, forms part of the ribosomal stalk which helps the ribosome interact with GTP-bound translation factors. Is thus essential for accurate translation. The sequence is that of Large ribosomal subunit protein bL12 from Corynebacterium aurimucosum (strain ATCC 700975 / DSM 44827 / CIP 107346 / CN-1) (Corynebacterium nigricans).